The primary structure comprises 138 residues: Nanos homolog 2 (138 aa).

Residues 31–55 (ETQEIEEPSPGPPLGQDQGLGAPGA) form a disordered region. The segment at 62 to 116 (LCNFCKHNGESRHVYSSHQLKTPDGVVVCPILRHYVCPVCGATGDQAHTLKYCPL) adopts a Nanos-type zinc-finger fold. Positions 63, 66, 79, 90, 98, 101, 109, and 114 each coordinate Zn(2+). 2 consecutive short sequence motifs (C2HC) follow at residues 63–90 (CNFC…VVVC) and 98–114 (CPVC…LKYC).

This sequence belongs to the nanos family. In terms of assembly, interacts with CNOT1, CNOT3, CNOT6L, CNOT7 and CNOT9. Testis and ovary. Expression found in several spermatogenic stages: in cells on the periphery of the tubules which could correspond to spermatogonia, in spermatocytes and in round spermatids (at protein level).

The protein localises to the cytoplasm. The protein resides in the P-body. Its subcellular location is the perinuclear region. Plays a key role in the sexual differentiation of germ cells by promoting the male fate but suppressing the female fate. Represses the female fate pathways by suppressing meiosis, which in turn results in the promotion of the male fate. Maintains the suppression of meiosis by preventing STRA8 expression, which is required for premeiotic DNA replication, after CYP26B1 is decreased. Regulates the localization of the CCR4-NOT deadenylation complex to P-bodies and plays a role in recruiting the complex to trigger the degradation of mRNAs involved in meiosis. Required for the maintenance of the spermatogonial stem cell population. Not essential for the assembly of P-bodies but is required for the maintenance of their normal state. The sequence is that of Nanos homolog 2 (NANOS2) from Homo sapiens (Human).